Here is a 471-residue protein sequence, read N- to C-terminus: Probable multidrug-efflux transporter MT1670 (471 aa).

A run of 14 helical transmembrane segments spans residues 23–43 (IVLAGGVALYATNEFLTISLL), 55–75 (LYAWVTTLYLVGSVVAATTVN), 91–111 (LAVFGLASLVCAAAPSMQILV), 116–136 (LQGIAGGLLAGLGYALINSTL), 146–166 (ALVSAMWGVATLIGPATGGLF), 174–194 (WAFGVMTLLTALMAMLVPVAL), 213–233 (VPVWSLLLMGAAALAISVAAL), 237–257 (LVQTAGLLAAAALLVAVFVVV), 279–299 (IYLTMSVQMIAAMVDTYVPLF), 308–328 (PVAAGFLGAALAVGWTVGEVA), 337–357 (VIGHVVAAAPLVMASGLALGA), 366–386 (VGIIALWALALLIIGTGIGIA), 410–430 (AINVVQLISGAFGAGLAGVVV), and 438–458 (VAAARGLYMAFTVLAAAGVIA).

This sequence belongs to the major facilitator superfamily.

The protein resides in the cell membrane. Could be involved in fluoroquinolones efflux. The sequence is that of Probable multidrug-efflux transporter MT1670 from Mycobacterium tuberculosis (strain CDC 1551 / Oshkosh).